The chain runs to 403 residues: Peroxisomal membrane protein PEX13 (403 aa).

Pro residues predominate over residues 1–11 (MASQPPPPPKP). Positions 1–69 (MASQPPPPPK…SQQTGSGNLN (69 aa)) are disordered. The Peroxisomal matrix segment spans residues 1–134 (MASQPPPPPK…SSRGAFQSIE (134 aa)). Over residues 59–69 (PSQQTGSGNLN) the composition is skewed to polar residues. Residues 135-155 (SIVHAFASVSMMMDATFSAVY) traverse the membrane as a helical segment. The targeting to peroxisomes stretch occupies residues 145–233 (MMMDATFSAV…EDRAANSAKS (89 aa)). At 156–174 (NSFRAVLDVANHFSRLKIH) the chain is on the cytoplasmic side. Residues 175–192 (FTKVFSAFALVRTIRYLY) traverse the membrane as a helical segment. Residues 175-196 (FTKVFSAFALVRTIRYLYRRLQ) are interaction with PEX19. Residues 193 to 233 (RRLQWMIGLRRGLENEDLWAESEGTVACLGAEDRAANSAKS) are Peroxisomal matrix-facing. Residues 234 to 254 (WPIFLFFAVILGGPYLIWKLL) form a helical membrane-spanning segment. The Cytoplasmic portion of the chain corresponds to 255-403 (STHSDEVTDS…TGKNGDKQDL (149 aa)). In terms of domain architecture, SH3 spans 272 to 336 (DDHVVARAEY…PANYVKILGK (65 aa)). A Phosphoserine modification is found at serine 354.

The protein belongs to the peroxin-13 family. Interacts (via SH3 domain) with PEX14 (via SH3-binding motif); forming the PEX13-PEX14 docking complex. Interacts with PEX19.

It localises to the peroxisome membrane. Its function is as follows. Component of the PEX13-PEX14 docking complex, a translocon channel that specifically mediates the import of peroxisomal cargo proteins bound to PEX5 receptor. The PEX13-PEX14 docking complex forms a large import pore which can be opened to a diameter of about 9 nm. Mechanistically, PEX5 receptor along with cargo proteins associates with the PEX14 subunit of the PEX13-PEX14 docking complex in the cytosol, leading to the insertion of the receptor into the organelle membrane with the concomitant translocation of the cargo into the peroxisome matrix. Involved in the import of PTS1- and PTS2-type containing proteins. The sequence is that of Peroxisomal membrane protein PEX13 (PEX13) from Bos taurus (Bovine).